A 149-amino-acid polypeptide reads, in one-letter code: Arginine repressor (149 aa).

It belongs to the ArgR family.

The protein localises to the cytoplasm. It participates in amino-acid biosynthesis; L-arginine biosynthesis [regulation]. Regulates arginine biosynthesis genes. The polypeptide is Arginine repressor (Listeria innocua serovar 6a (strain ATCC BAA-680 / CLIP 11262)).